The sequence spans 836 residues: Glutamate receptor ionotropic, kainate glr-3 (836 aa).

Residues 1 to 19 form the signal peptide; sequence MFWIAKTLIAFLILLKTDC. Residues 20–523 lie on the Extracellular side of the membrane; it reads YKIAIPANLI…WFKFMDPLST (504 aa). Cys76 and Cys320 are joined by a disulfide. Asn225, Asn257, Asn356, Asn391, and Asn419 each carry an N-linked (GlcNAc...) asparagine glycan. L-glutamate contacts are provided by residues 478-480 and Arg485; that span reads SLT. A helical transmembrane segment spans residues 524 to 544; sequence QVWIMTFASYFVVSVAIWIIA. Residues 545–600 are Cytoplasmic-facing; the sequence is KISPYEQFERDEDNGQYKPVDNQFSLRNSFWFTVCSLMQQGSELCPRAASTRLLTG. The helical transmembrane segment at 601 to 621 threads the bilayer; it reads IWWFFALILISSYTANLAAVL. Residues 622–780 are Extracellular-facing; it reads TTRRMETPIE…KRKDQDDGES (159 aa). 651–652 serves as a coordination point for L-glutamate; the sequence is ST. N-linked (GlcNAc...) asparagine glycosylation is present at Asn657. Residue Glu699 coordinates L-glutamate. Residues 781 to 801 form a helical membrane-spanning segment; that stretch reads IGGIFIILVVGLVLTAVLVIF. Topologically, residues 802–836 are cytoplasmic; it reads ELITTRKPSPAQSQVIRHVNVIPSFKLGFFRWNVN.

This sequence belongs to the glutamate-gated ion channel (TC 1.A.10.1) family. Expressed in the intestine and in the ASER neuron. Also expressed in the thermosensitive RIA interneuron.

The protein localises to the cell membrane. It localises to the postsynaptic cell membrane. Its activity is regulated as follows. Activated by low temperature of 18 degrees Celsius in ASER neuron. Its function is as follows. Ionotropic glutamate receptor. Activation by glutamate requires additional verification. L-glutamate acts as an excitatory neurotransmitter at many synapses in the central nervous system. Binding of the excitatory neurotransmitter L-glutamate induces a conformation change, leading to the opening of the cation channel, and thereby converts the chemical signal to an electrical impulse. The receptor then desensitizes rapidly and enters a transient inactive state, characterized by the presence of bound agonist. Independent of its ionotropic glutamate receptor activity, acts as a thermoreceptor in the ASER neuron where it triggers a calcium response to activate cold avoidance behavior in response to temperatures below 19 degrees Celsius. Possibly functions as a metabotropic cold receptor and acts upstream of the G(o) G protein goa-1 in the ASER neuron. Also functions in cold sensing in the intestine. The polypeptide is Glutamate receptor ionotropic, kainate glr-3 (Caenorhabditis elegans).